Here is a 538-residue protein sequence, read N- to C-terminus: 2-isopropylmalate synthase (538 aa).

The Pyruvate carboxyltransferase domain maps to 6-277 (LIIFDTTLRD…DSTVPLSTID (272 aa)). Mn(2+) is bound by residues Asp15, His206, His208, and Asn242. The segment at 406–538 (RLEQVQVSCG…AHPDAAAQKL (133 aa)) is regulatory domain.

The protein belongs to the alpha-IPM synthase/homocitrate synthase family. LeuA type 1 subfamily. In terms of assembly, homodimer. It depends on Mn(2+) as a cofactor.

Its subcellular location is the cytoplasm. It catalyses the reaction 3-methyl-2-oxobutanoate + acetyl-CoA + H2O = (2S)-2-isopropylmalate + CoA + H(+). Its pathway is amino-acid biosynthesis; L-leucine biosynthesis; L-leucine from 3-methyl-2-oxobutanoate: step 1/4. Catalyzes the condensation of the acetyl group of acetyl-CoA with 3-methyl-2-oxobutanoate (2-ketoisovalerate) to form 3-carboxy-3-hydroxy-4-methylpentanoate (2-isopropylmalate). The sequence is that of 2-isopropylmalate synthase from Gloeobacter violaceus (strain ATCC 29082 / PCC 7421).